A 357-amino-acid polypeptide reads, in one-letter code: Adenosine deaminase (357 aa).

2 residues coordinate Zn(2+): His-16 and His-18. Residues His-18, Asp-20, and Gly-185 each contribute to the substrate site. His-212 is a binding site for Zn(2+). The active-site Proton donor is Glu-215. Asp-294 provides a ligand contact to Zn(2+). Substrate is bound at residue Asp-295.

It belongs to the metallo-dependent hydrolases superfamily. Adenosine and AMP deaminases family. Requires Zn(2+) as cofactor.

The protein resides in the cell membrane. It localises to the cell junction. It is found in the cytoplasmic vesicle lumen. Its subcellular location is the cytoplasm. The protein localises to the lysosome. It carries out the reaction adenosine + H2O + H(+) = inosine + NH4(+). The catalysed reaction is 2'-deoxyadenosine + H2O + H(+) = 2'-deoxyinosine + NH4(+). In terms of biological role, catalyzes the hydrolytic deamination of adenosine and 2-deoxyadenosine. Plays an important role in purine metabolism and in adenosine homeostasis. Modulates signaling by extracellular adenosine, and so contributes indirectly to cellular signaling events. May act as a positive regulator of T-cell coactivation. The polypeptide is Adenosine deaminase (ADA) (Gallus gallus (Chicken)).